A 233-amino-acid chain; its full sequence is Ribonuclease HII (233 aa).

The RNase H type-2 domain occupies 26–215 (QLVAGIDEVG…VRASEGEGLE (190 aa)). D32, E33, and D124 together coordinate a divalent metal cation. The disordered stretch occupies residues 211 to 233 (GEGLETAAGRQSSEGKKGRRPRG).

It belongs to the RNase HII family. Requires Mn(2+) as cofactor. The cofactor is Mg(2+).

Its subcellular location is the cytoplasm. It carries out the reaction Endonucleolytic cleavage to 5'-phosphomonoester.. Functionally, endonuclease that specifically degrades the RNA of RNA-DNA hybrids. The polypeptide is Ribonuclease HII (Syntrophobacter fumaroxidans (strain DSM 10017 / MPOB)).